The chain runs to 172 residues: Molybdopterin synthase catalytic subunit (172 aa).

Serine 20 bears the Phosphoserine mark. Substrate is bound by residues 127–128, lysine 143, and 150–152; these read HR and KKE.

This sequence belongs to the MoaE family. MOCS2B subfamily. In terms of assembly, heterotetramer; composed of 2 small (MOCS2A) and 2 large (MOCS2B) subunits.

It localises to the cytoplasm. Its subcellular location is the cytosol. It carries out the reaction 2 [molybdopterin-synthase sulfur-carrier protein]-C-terminal-Gly-aminoethanethioate + cyclic pyranopterin phosphate + H2O = molybdopterin + 2 [molybdopterin-synthase sulfur-carrier protein]-C-terminal Gly-Gly + 2 H(+). Its pathway is cofactor biosynthesis; molybdopterin biosynthesis. Its function is as follows. Catalytic subunit of the molybdopterin synthase complex, a complex that catalyzes the conversion of precursor Z into molybdopterin. Acts by mediating the incorporation of 2 sulfur atoms from thiocarboxylated MOCS2A into precursor Z to generate a dithiolene group. The protein is Molybdopterin synthase catalytic subunit of Pongo abelii (Sumatran orangutan).